Consider the following 448-residue polypeptide: L-seryl-tRNA(Sec) selenium transferase (448 aa).

The residue at position 284 (Lys-284) is an N6-(pyridoxal phosphate)lysine.

This sequence belongs to the SelA family. Pyridoxal 5'-phosphate serves as cofactor.

Its subcellular location is the cytoplasm. It catalyses the reaction L-seryl-tRNA(Sec) + selenophosphate + H(+) = L-selenocysteinyl-tRNA(Sec) + phosphate. It participates in aminoacyl-tRNA biosynthesis; selenocysteinyl-tRNA(Sec) biosynthesis; selenocysteinyl-tRNA(Sec) from L-seryl-tRNA(Sec) (bacterial route): step 1/1. In terms of biological role, converts seryl-tRNA(Sec) to selenocysteinyl-tRNA(Sec) required for selenoprotein biosynthesis. This Nautilia profundicola (strain ATCC BAA-1463 / DSM 18972 / AmH) protein is L-seryl-tRNA(Sec) selenium transferase.